A 288-amino-acid chain; its full sequence is Proteasome subunit beta (288 aa).

Residues 1–57 (MTVDGQVGRWPVSAIPAAYMRPGSGSFTEFLAGAEPHLLPGRAGAQPAGAAPAVPHG) constitute a propeptide, removed in mature form; by autocatalysis. Catalysis depends on threonine 58, which acts as the Nucleophile.

The protein belongs to the peptidase T1B family. In terms of assembly, the 20S proteasome core is composed of 14 alpha and 14 beta subunits that assemble into four stacked heptameric rings, resulting in a barrel-shaped structure. The two inner rings, each composed of seven catalytic beta subunits, are sandwiched by two outer rings, each composed of seven alpha subunits. The catalytic chamber with the active sites is on the inside of the barrel. Has a gated structure, the ends of the cylinder being occluded by the N-termini of the alpha-subunits. Is capped by the proteasome-associated ATPase, ARC.

It is found in the cytoplasm. It catalyses the reaction Cleavage of peptide bonds with very broad specificity.. The protein operates within protein degradation; proteasomal Pup-dependent pathway. With respect to regulation, the formation of the proteasomal ATPase ARC-20S proteasome complex, likely via the docking of the C-termini of ARC into the intersubunit pockets in the alpha-rings, may trigger opening of the gate for substrate entry. Interconversion between the open-gate and close-gate conformations leads to a dynamic regulation of the 20S proteasome proteolysis activity. Component of the proteasome core, a large protease complex with broad specificity involved in protein degradation. The polypeptide is Proteasome subunit beta (Nakamurella multipartita (strain ATCC 700099 / DSM 44233 / CIP 104796 / JCM 9543 / NBRC 105858 / Y-104) (Microsphaera multipartita)).